Reading from the N-terminus, the 538-residue chain is Probable inorganic phosphate transporter 1-4 (538 aa).

Residues 1–23 (MAGELKVLNALDSAKTQWYHFTA) are Cytoplasmic-facing. The helical transmembrane segment at 24–44 (IVIAGMGFFTDAYDLFSISLV) threads the bilayer. At 45–69 (TKLLGRIYYFNPASKSPGSLPPNVS) the chain is on the extracellular side. A helical transmembrane segment spans residues 70–90 (AAVNGVAFCGTLAGQLFFGWL). The Cytoplasmic segment spans residues 91-98 (GDKMGRKK). Residues 99 to 119 (VYGMTLMLMVICCLASGLSFG) traverse the membrane as a helical segment. At 120–123 (SSAK) the chain is on the extracellular side. A helical transmembrane segment spans residues 124-144 (GVMATLCFFRFWLGFGIGGDY). Topologically, residues 145–163 (PLSATIMSEYANKRTRGAF) are cytoplasmic. The helical transmembrane segment at 164-184 (IAAVFAMQGFGNLTGGIVAII) threads the bilayer. Over 185 to 210 (VSAAFKSRFDAPAYRDDRTGSTVPQA) the chain is Extracellular. The chain crosses the membrane as a helical span at residues 211-231 (DYAWRIVLMFGAIPALLTYYW). At 232 to 294 (RMKMPETARY…RQFLRRHGRH (63 aa)) the chain is on the cytoplasmic side. A helical membrane pass occupies residues 295–315 (LLGTTVCWFVLDIAFYSSNLF). Residues 316–346 (QKDIYTAVQWLPKADTMSALEEMFKISRAQT) lie on the Extracellular side of the membrane. Residues 347–367 (LVALCGTIPGYWFTVFFIDII) traverse the membrane as a helical segment. Residues 368–369 (GR) are Cytoplasmic-facing. Residues 370–390 (FVIQLGGFFFMTAFMLGLAVP) form a helical membrane-spanning segment. Residues 391 to 396 (YHHWTT) lie on the Extracellular side of the membrane. Residues 397–417 (PGNHIGFVVMYAFTFFFANFG) form a helical membrane-spanning segment. The Cytoplasmic portion of the chain corresponds to 418-440 (PNSTTFIVPAEIFPARLRSTCHG). Residues 441–461 (ISAAAGKAGAIVGSFGFLYAA) traverse the membrane as a helical segment. Topologically, residues 462-481 (QSTDASKTDAGYPPGIGVRN) are extracellular. The chain crosses the membrane as a helical span at residues 482–502 (SLFFLAGCNVIGFFFTFLVPE). The Cytoplasmic segment spans residues 503–538 (SKGKSLEELSGENEDDDDVPEAPATADHRTAPAPPA). The tract at residues 507–538 (SLEELSGENEDDDDVPEAPATADHRTAPAPPA) is disordered. Residues 511 to 522 (LSGENEDDDDVP) show a composition bias toward acidic residues.

This sequence belongs to the major facilitator superfamily. Phosphate:H(+) symporter (TC 2.A.1.9) family. Expressed at low levels in roots.

It is found in the membrane. In terms of biological role, high-affinity transporter for external inorganic phosphate. The chain is Probable inorganic phosphate transporter 1-4 (PHT1-4) from Oryza sativa subsp. japonica (Rice).